We begin with the raw amino-acid sequence, 474 residues long: MKRVLVLLLAVAFGHALERGRDYEKNKVCKEFSHLGKEDFTSLSLVLYSRKFPSGTFEQVSQLVKEVVSLTEACCAEGADPDCYDTRTSALSAKSCESNSPFPVHPGTAECCTKEGLERKLCMAALKHQPQEFPTYVEPTNDEICEAFRKDPKEYANQFMWEYSTNYGQAPLSLLVSYTKSYLSMVGSCCTSASPTVCFLKERLQLKHLSLLTTLSNRVCSQYAAYGEKKSRLSNLIKLAQKVPTADLEDVLPLAEDITNILSKCCESASEDCMAKELPEHTVKLCDNLSTKNSKFEDCCQEKTAMDVFVCTYFMPAAQLPELPDVELPTNKDVCDPGNTKVMDKYTFELSRRTHLPEVFLSKVLEPTLKSLGECCDVEDSTTCFNAKGPLLKKELSSFIDKGQELCADYSENTFTEYKKKLAERLKAKLPDATPTELAKLVNKHSDFASNCCSINSPPLYCDSEIDAELKNIL.

The first 16 residues, 1–16 (MKRVLVLLLAVAFGHA), serve as a signal peptide directing secretion. 3 consecutive Albumin domains span residues 17-208 (LERG…QLKH), 209-394 (LSLL…LLKK), and 395-474 (ELSS…KNIL). Intrachain disulfides connect Cys29-Cys75, Cys74-Cys83, Cys96-Cys112, Cys111-Cys122, Cys145-Cys190, Cys189-Cys198, Cys220-Cys266, Cys265-Cys273, Cys286-Cys300, Cys299-Cys311, Cys335-Cys376, Cys375-Cys384, Cys407-Cys453, and Cys452-Cys462.

Belongs to the ALB/AFP/VDB family. In terms of assembly, associates with membrane-bound immunoglobulin on the surface of B-lymphocytes and with IgG Fc receptor on the membranes of T-lymphocytes. Interacts with LRP2; the interaction is required for renal uptake of GC in complex with 25-hydroxyvitamin D3. Post-translationally, allele GC*1S is O-glycosylated at Thr-436. The trisaccharide sugar moiety can be modified by the successive removal of neuraminic acid and galactose leaving an O-mceeN-acetyl-galactosamine. This conversion is thought to produce a macrophage-activating factor (Gc-MAF). Only a minor proportion of plasma GC is O-glycosylated. The potential N-glycosylation site predicted at Asn-288 is thought to be nonglycosylated. Expressed in the liver. Found in plasma, ascites, cerebrospinal fluid and urine.

It localises to the secreted. Involved in vitamin D transport and storage, scavenging of extracellular G-actin, enhancement of the chemotactic activity of C5 alpha for neutrophils in inflammation and macrophage activation. This is Vitamin D-binding protein (GC) from Homo sapiens (Human).